The sequence spans 61 residues: UPF0434 protein PST_2635 (61 aa).

It belongs to the UPF0434 family.

This chain is UPF0434 protein PST_2635, found in Stutzerimonas stutzeri (strain A1501) (Pseudomonas stutzeri).